Here is a 203-residue protein sequence, read N- to C-terminus: Outer-membrane lipoprotein carrier protein (203 aa).

The signal sequence occupies residues 1-21; it reads MKKMAIACALLSSVVASSVWA. Residues 178–203 are disordered; that stretch reads QQNGAVEPSKFTFTPPQGVTIDDQRK.

It belongs to the LolA family. As to quaternary structure, monomer.

The protein resides in the periplasm. Its function is as follows. Participates in the translocation of lipoproteins from the inner membrane to the outer membrane. Only forms a complex with a lipoprotein if the residue after the N-terminal Cys is not an aspartate (The Asp acts as a targeting signal to indicate that the lipoprotein should stay in the inner membrane). The protein is Outer-membrane lipoprotein carrier protein of Salmonella typhi.